The following is a 95-amino-acid chain: Co-chaperonin GroES (95 aa).

It belongs to the GroES chaperonin family. Heptamer of 7 subunits arranged in a ring. Interacts with the chaperonin GroEL.

It localises to the cytoplasm. Functionally, together with the chaperonin GroEL, plays an essential role in assisting protein folding. The GroEL-GroES system forms a nano-cage that allows encapsulation of the non-native substrate proteins and provides a physical environment optimized to promote and accelerate protein folding. GroES binds to the apical surface of the GroEL ring, thereby capping the opening of the GroEL channel. The protein is Co-chaperonin GroES of Streptococcus equi subsp. equi (strain 4047).